Here is a 153-residue protein sequence, read N- to C-terminus: Alpha-amylase type B isozyme (153 aa).

Substrate-binding positions include Lys-19, 25-27, His-38, Gln-44, Lys-123, and Trp-150; that span reads GWW.

This sequence belongs to the glycosyl hydrolase 13 family. Monomer. Ca(2+) is required as a cofactor.

It carries out the reaction Endohydrolysis of (1-&gt;4)-alpha-D-glucosidic linkages in polysaccharides containing three or more (1-&gt;4)-alpha-linked D-glucose units.. The sequence is that of Alpha-amylase type B isozyme (AMY1.4) from Hordeum vulgare (Barley).